The primary structure comprises 177 residues: Thaumatin-like protein (177 aa).

An N-terminal signal peptide occupies residues 1–26 (MASPATSSAVLVVVLVATLAAGGANA).

This sequence belongs to the thaumatin family.

Its subcellular location is the secreted. This is Thaumatin-like protein from Oryza sativa subsp. japonica (Rice).